The following is a 304-amino-acid chain: MVAIIYSAEFLRHETGPTHPECPARLTAIATALRKMPGANYLHWQKPSPVTWNLDPYILRCHSQEYLNKLAKLAELGGGSLDADTPVSPQSYDVARLAVRAWLDGVDHVLNQREAVFVLARPPGHHAIRNTGMGFCLLNNVAIAAHYALTRPGVERVAILDWDVHHGNGTEALVDHNPRIFYCSLHQFPCYPGTGAAGDRGQHDNVLNIPLKPGGDGKVYREAFEHKVLPFLRQVKPDLLLVSAGYDANHSDPLAYMNLIPEDYGMMTHYLMEISPYPVLGLEGGYHLPSLAKSVVETLKPLLF.

The protein belongs to the histone deacetylase family.

Functionally, putative deacetylase. This is an uncharacterized protein from Synechocystis sp. (strain ATCC 27184 / PCC 6803 / Kazusa).